The primary structure comprises 92 residues: Small ribosomal subunit protein uS19 (92 aa).

This sequence belongs to the universal ribosomal protein uS19 family.

Protein S19 forms a complex with S13 that binds strongly to the 16S ribosomal RNA. This chain is Small ribosomal subunit protein uS19, found in Novosphingobium aromaticivorans (strain ATCC 700278 / DSM 12444 / CCUG 56034 / CIP 105152 / NBRC 16084 / F199).